Reading from the N-terminus, the 407-residue chain is L-cysteine:1D-myo-inositol 2-amino-2-deoxy-alpha-D-glucopyranoside ligase (407 aa).

C43 lines the Zn(2+) pocket. Residues 43-46 (CGIT), T58, and 81-83 (NAT) contribute to the L-cysteinyl-5'-AMP site. The 'HIGH' region signature appears at 45–55 (ITPYDATHLGH). A 'ERGGDP' region motif is present at residues 183 to 188 (QRGGDP). W223 provides a ligand contact to L-cysteinyl-5'-AMP. C227 provides a ligand contact to Zn(2+). Position 245-247 (245-247 (GSD)) interacts with L-cysteinyl-5'-AMP. Zn(2+) is bound at residue H252. V279 provides a ligand contact to L-cysteinyl-5'-AMP. Positions 285–289 (KMSKS) match the 'KMSKS' region motif.

This sequence belongs to the class-I aminoacyl-tRNA synthetase family. MshC subfamily. Monomer. Zn(2+) serves as cofactor.

It carries out the reaction 1D-myo-inositol 2-amino-2-deoxy-alpha-D-glucopyranoside + L-cysteine + ATP = 1D-myo-inositol 2-(L-cysteinylamino)-2-deoxy-alpha-D-glucopyranoside + AMP + diphosphate + H(+). In terms of biological role, catalyzes the ATP-dependent condensation of GlcN-Ins and L-cysteine to form L-Cys-GlcN-Ins. In Streptosporangium roseum (strain ATCC 12428 / DSM 43021 / JCM 3005 / KCTC 9067 / NCIMB 10171 / NRRL 2505 / NI 9100), this protein is L-cysteine:1D-myo-inositol 2-amino-2-deoxy-alpha-D-glucopyranoside ligase.